The sequence spans 528 residues: Transcriptional activator protein UGA3 (528 aa).

A DNA-binding region (zn(2)-C6 fungal-type) is located at residues 17–44 (CITCKIRKKRCSEDKPVCRDCRRLSFPC). Residues 55 to 62 (SLKKIKAD) carry the Nuclear localization signal motif.

In terms of assembly, UGA3 proteins associate in oligomers, at least in the presence of inducer.

The protein localises to the nucleus. Its function is as follows. GABA-dependent positive regulation of genes required for catabolism of GABA (UGA4, UGA1, and UGA2). The sequence is that of Transcriptional activator protein UGA3 (UGA3) from Saccharomyces cerevisiae (strain ATCC 204508 / S288c) (Baker's yeast).